Consider the following 720-residue polypeptide: Iron-sulfur clusters transporter ATM1, mitochondrial (720 aa).

The transit peptide at 1-36 directs the protein to the mitochondrion; sequence MIMFRSLSVTPVWKAGLSLSHRSIPINSRLSSVRNY. At 37–129 the chain is on the mitochondrial matrix side; sequence ISIGCANKTG…PSGDNKVKIR (93 aa). A compositionally biased stretch (polar residues) spans 64–77; that stretch reads RFNSSSNGNGTDKN. A disordered region spans residues 64–102; that stretch reads RFNSSSNGNGTDKNASVAPKTEVKKIVPPKPSTNGKSKT. Residues 130–151 form a helical membrane-spanning segment; it reads VLIALALLIGAKLLNVQVPFFF. Residues 130 to 421 enclose the ABC transmembrane type-1 domain; it reads VLIALALLIG…LGSVYRELKQ (292 aa). Topologically, residues 152–175 are mitochondrial intermembrane; sequence KQTIDSMNIEWGPDVATVLPVAIT. Residues 176–199 traverse the membrane as a helical segment; sequence MTILSYGAARFGAVMFGELRNAVF. Residues 200 to 248 lie on the Mitochondrial matrix side of the membrane; sequence AKVAQNAIRKVSLQTFQHLMKLDLGWHLSRQTGGLTRAMDRGTKGISYV. A helical transmembrane segment spans residues 249–272; sequence LSAMVFHMIPITFEISVVCGILTY. Glutamine 273 is a topological domain (mitochondrial intermembrane). Residues 274-294 form a helical membrane-spanning segment; it reads FGSSFAAMTFVTMLLYSFFTF. At 295–360 the chain is on the mitochondrial matrix side; it reads KTTAWRTEFR…SQIKVAQSLA (66 aa). Glutathione-binding positions include 300-304 and 363-366; these read RTEFR and NAGQ. The helical transmembrane segment at 361-379 threads the bilayer; it reads FLNAGQNFIFTSALTAMMY. Over 380 to 394 the chain is Mitochondrial intermembrane; sequence MGASGVMEGALTVGD. The helical transmembrane segment at 395 to 416 threads the bilayer; sequence LVLINQLVFQLSVPLNFLGSVY. Glycine 413 is a glutathione binding site. Topologically, residues 417-720 are mitochondrial matrix; the sequence is RELKQSLIDM…EKEPRTSKKD (304 aa). The region spanning 456 to 692 is the ABC transporter domain; that stretch reads IKFENVTFGY…PNSLYSELWN (237 aa). ATP-binding positions include tyrosine 465 and 489-500; that span reads GPSGSGKSTILR.

Belongs to the ABC transporter superfamily. ABCB family. Heavy Metal importer (TC 3.A.1.210) subfamily. Homodimer.

It localises to the mitochondrion inner membrane. Functionally, performs an essential function in the generation of cytoplasmic iron-sulfur proteins by mediating the ATP-dependent export of Fe/S cluster precursors synthesized by NFS1 and other mitochondrial proteins. Hydrolyzes ATP. Binds glutathione and may function by transporting a glutathione-conjugated iron-sulfur compound. The protein is Iron-sulfur clusters transporter ATM1, mitochondrial of Kluyveromyces lactis (strain ATCC 8585 / CBS 2359 / DSM 70799 / NBRC 1267 / NRRL Y-1140 / WM37) (Yeast).